Consider the following 65-residue polypeptide: Large ribosomal subunit protein bL31 (65 aa).

The Zn(2+) site is built by Cys16, Cys18, Cys36, and Cys39.

The protein belongs to the bacterial ribosomal protein bL31 family. Type A subfamily. In terms of assembly, part of the 50S ribosomal subunit. It depends on Zn(2+) as a cofactor.

In terms of biological role, binds the 23S rRNA. The chain is Large ribosomal subunit protein bL31 from Geobacter sulfurreducens (strain ATCC 51573 / DSM 12127 / PCA).